The chain runs to 61 residues: MKLSILVKAMKRNNGFRYDYCIAECSEHFLDDVCKPVCIDKGYSDGGCIGLAPNFKCCCKK.

4 cysteine pairs are disulfide-bonded: Cys-21–Cys-59, Cys-25–Cys-48, Cys-34–Cys-57, and Cys-38–Cys-58.

Belongs to the DEFL family.

This Arabidopsis thaliana (Mouse-ear cress) protein is Putative defensin-like protein 72.